Here is a 622-residue protein sequence, read N- to C-terminus: Polypeptide N-acetylgalactosaminyltransferase 6 (622 aa).

At 1–8 (MRLLRRRH) the chain is on the cytoplasmic side. Residues 9-28 (MSLRLAMLGSVFMLFLFIRQ) form a helical; Signal-anchor for type II membrane protein membrane-spanning segment. The Lumenal portion of the chain corresponds to 29 to 622 (KDVSNQEQAM…RDPYQLWLFV (594 aa)). A glycan (N-linked (GlcNAc...) asparagine) is linked at asparagine 86. Residues 176 to 285 (LPTTSVIIVF…HGWLEPLLAR (110 aa)) are catalytic subdomain A. Residues aspartate 269, histidine 271, and histidine 407 each contribute to the Mn(2+) site. The catalytic subdomain B stretch occupies residues 348–410 (PIKSPTFAGG…PCSVVGHVFR (63 aa)). Asparagine 476 is a glycosylation site (N-linked (GlcNAc...) asparagine). The region spanning 506–622 (TNQCLDVGEN…RDPYQLWLFV (117 aa)) is the Ricin B-type lectin domain. A disulfide bond links cysteine 509 and cysteine 527. UDP-N-acetyl-alpha-D-galactosamine-binding residues include aspartate 511, glutamate 514, histidine 528, and asparagine 533. Intrachain disulfides connect cysteine 553–cysteine 566 and cysteine 597–cysteine 610.

It belongs to the glycosyltransferase 2 family. GalNAc-T subfamily. It depends on Mn(2+) as a cofactor.

The protein localises to the golgi apparatus membrane. The catalysed reaction is L-seryl-[protein] + UDP-N-acetyl-alpha-D-galactosamine = a 3-O-[N-acetyl-alpha-D-galactosaminyl]-L-seryl-[protein] + UDP + H(+). The enzyme catalyses L-threonyl-[protein] + UDP-N-acetyl-alpha-D-galactosamine = a 3-O-[N-acetyl-alpha-D-galactosaminyl]-L-threonyl-[protein] + UDP + H(+). The protein operates within protein modification; protein glycosylation. Catalyzes the initial reaction in O-linked oligosaccharide biosynthesis, the transfer of an N-acetyl-D-galactosamine residue to a serine or threonine residue on the protein receptor. May participate in synthesis of oncofetal fibronectin. Has activity toward Muc1a, Muc2, EA2 and fibronectin peptides. This Mus musculus (Mouse) protein is Polypeptide N-acetylgalactosaminyltransferase 6 (Galnt6).